The primary structure comprises 75 residues: Putative antitoxin VapB17 (75 aa).

Functionally, putative antitoxin component of a possible type II toxin-antitoxin (TA) system. The cognate toxin is VapC17. This chain is Putative antitoxin VapB17 (vapB17), found in Mycobacterium tuberculosis (strain CDC 1551 / Oshkosh).